The chain runs to 221 residues: Protein-L-isoaspartate O-methyltransferase (221 aa).

Serine 70 is a catalytic residue.

This sequence belongs to the methyltransferase superfamily. L-isoaspartyl/D-aspartyl protein methyltransferase family.

The protein resides in the cytoplasm. The catalysed reaction is [protein]-L-isoaspartate + S-adenosyl-L-methionine = [protein]-L-isoaspartate alpha-methyl ester + S-adenosyl-L-homocysteine. Functionally, catalyzes the methyl esterification of L-isoaspartyl residues in peptides and proteins that result from spontaneous decomposition of normal L-aspartyl and L-asparaginyl residues. It plays a role in the repair and/or degradation of damaged proteins. The polypeptide is Protein-L-isoaspartate O-methyltransferase (Alkalilimnicola ehrlichii (strain ATCC BAA-1101 / DSM 17681 / MLHE-1)).